Here is a 452-residue protein sequence, read N- to C-terminus: RNA polymerase II-associated protein rba50 (452 aa).

Disordered regions lie at residues 60–83 (LRKN…IDEE), 125–202 (EREL…QTKR), and 223–261 (PIKG…PLEF). Residues 125–135 (ERELAQRKDRS) show a composition bias toward basic and acidic residues. Residues 136–154 (SQVNTPDLSQRPSDDSFLS) are compositionally biased toward polar residues. Positions 156–165 (EKLRSSEKLN) are enriched in basic and acidic residues. Positions 170-191 (SVLSSEAVDSSSGSPSPPMALS) are enriched in low complexity.

Belongs to the RPAP1 family. Interacts with RNA polymerase II.

Its subcellular location is the cytoplasm. The protein localises to the nucleus. Its function is as follows. Forms an interface between the RNA polymerase II enzyme and chaperone/scaffolding proteins, suggesting that it is required to connect RNA polymerase II to regulators of protein complex formation. This Schizosaccharomyces pombe (strain 972 / ATCC 24843) (Fission yeast) protein is RNA polymerase II-associated protein rba50 (rba50).